The following is a 329-amino-acid chain: Beta-ribofuranosylphenol 5'-phosphate synthase (329 aa).

It belongs to the beta-RFA-P synthase family. In terms of assembly, homodimer. The cofactor is Mg(2+).

The enzyme catalyses 5-phospho-alpha-D-ribose 1-diphosphate + 4-hydroxybenzoate + H(+) = 4-(beta-D-ribofuranosyl)phenol 5'-phosphate + CO2 + diphosphate. The catalysed reaction is 4-aminobenzoate + 5-phospho-alpha-D-ribose 1-diphosphate + H(+) = 4-(beta-D-ribofuranosyl)aminobenzene 5'-phosphate + CO2 + diphosphate. It functions in the pathway cofactor biosynthesis; 5,6,7,8-tetrahydromethanopterin biosynthesis. Functionally, catalyzes the condensation of 4-hydroxybenzoate (HB) with 5-phospho-alpha-D-ribose 1-diphosphate (PRPP) to produce beta-ribofuranosylphenol 5'-phosphate (beta-RFH-P). Also catalyzes the condensation of 4-aminobenzoate (pABA) with PRPP to produce beta-ribofuranosylaminobenzene 5'-phosphate (beta-RFA-P). Only 4-hydroxybenzoate is known to be biosynthesized by methanogenic archaea, but 4-aminobenzoate can be used as substrate by growing methanogens when it is present in the growth medium. In Methanothermobacter thermautotrophicus (strain ATCC 29096 / DSM 1053 / JCM 10044 / NBRC 100330 / Delta H) (Methanobacterium thermoautotrophicum), this protein is Beta-ribofuranosylphenol 5'-phosphate synthase.